A 560-amino-acid polypeptide reads, in one-letter code: Membrane protein insertase YidC (560 aa).

The chain crosses the membrane as a helical span at residues Met-1–Leu-21. Positions Val-42 to Ala-66 are disordered. The next 5 membrane-spanning stretches (helical) occupy residues Leu-341 to Leu-361, Leu-367 to Phe-387, Leu-437 to Leu-457, Trp-468 to Met-488, and Pro-515 to Val-535.

This sequence belongs to the OXA1/ALB3/YidC family. Type 1 subfamily. As to quaternary structure, interacts with the Sec translocase complex via SecD. Specifically interacts with transmembrane segments of nascent integral membrane proteins during membrane integration.

The protein localises to the cell inner membrane. Its function is as follows. Required for the insertion and/or proper folding and/or complex formation of integral membrane proteins into the membrane. Involved in integration of membrane proteins that insert both dependently and independently of the Sec translocase complex, as well as at least some lipoproteins. Aids folding of multispanning membrane proteins. The sequence is that of Membrane protein insertase YidC from Pseudomonas putida (strain ATCC 47054 / DSM 6125 / CFBP 8728 / NCIMB 11950 / KT2440).